The sequence spans 163 residues: NADH-quinone oxidoreductase subunit I (163 aa).

4Fe-4S ferredoxin-type domains are found at residues 54-84 (LRRY…IESD) and 94-123 (TRYD…ETHI). [4Fe-4S] cluster-binding residues include Cys-64, Cys-67, Cys-70, Cys-74, Cys-103, Cys-106, Cys-109, and Cys-113.

Belongs to the complex I 23 kDa subunit family. NDH-1 is composed of 14 different subunits. Subunits NuoA, H, J, K, L, M, N constitute the membrane sector of the complex. Requires [4Fe-4S] cluster as cofactor.

It is found in the cell inner membrane. The enzyme catalyses a quinone + NADH + 5 H(+)(in) = a quinol + NAD(+) + 4 H(+)(out). NDH-1 shuttles electrons from NADH, via FMN and iron-sulfur (Fe-S) centers, to quinones in the respiratory chain. The immediate electron acceptor for the enzyme in this species is believed to be ubiquinone. Couples the redox reaction to proton translocation (for every two electrons transferred, four hydrogen ions are translocated across the cytoplasmic membrane), and thus conserves the redox energy in a proton gradient. The polypeptide is NADH-quinone oxidoreductase subunit I (Cupriavidus metallidurans (strain ATCC 43123 / DSM 2839 / NBRC 102507 / CH34) (Ralstonia metallidurans)).